The chain runs to 139 residues: Putative pre-16S rRNA nuclease (139 aa).

This sequence belongs to the YqgF nuclease family.

The protein resides in the cytoplasm. Could be a nuclease involved in processing of the 5'-end of pre-16S rRNA. The chain is Putative pre-16S rRNA nuclease from Streptococcus sanguinis (strain SK36).